A 344-amino-acid polypeptide reads, in one-letter code: Anthranilate phosphoribosyltransferase (344 aa).

5-phospho-alpha-D-ribose 1-diphosphate is bound by residues glycine 84, 87-88, threonine 92, 94-97, 112-120, and serine 124; these read GD, NIST, and KHGGRSVSS. Position 84 (glycine 84) interacts with anthranilate. Serine 96 serves as a coordination point for Mg(2+). Arginine 170 provides a ligand contact to anthranilate. Mg(2+)-binding residues include aspartate 229 and glutamate 230.

Belongs to the anthranilate phosphoribosyltransferase family. As to quaternary structure, homodimer. The cofactor is Mg(2+).

It carries out the reaction N-(5-phospho-beta-D-ribosyl)anthranilate + diphosphate = 5-phospho-alpha-D-ribose 1-diphosphate + anthranilate. The protein operates within amino-acid biosynthesis; L-tryptophan biosynthesis; L-tryptophan from chorismate: step 2/5. Functionally, catalyzes the transfer of the phosphoribosyl group of 5-phosphorylribose-1-pyrophosphate (PRPP) to anthranilate to yield N-(5'-phosphoribosyl)-anthranilate (PRA). The protein is Anthranilate phosphoribosyltransferase of Janthinobacterium sp. (strain Marseille) (Minibacterium massiliensis).